Reading from the N-terminus, the 382-residue chain is Putative glutamate--cysteine ligase 2-1 (382 aa).

It belongs to the glutamate--cysteine ligase type 2 family. YbdK subfamily.

The enzyme catalyses L-cysteine + L-glutamate + ATP = gamma-L-glutamyl-L-cysteine + ADP + phosphate + H(+). ATP-dependent carboxylate-amine ligase which exhibits weak glutamate--cysteine ligase activity. This Frankia alni (strain DSM 45986 / CECT 9034 / ACN14a) protein is Putative glutamate--cysteine ligase 2-1.